A 380-amino-acid chain; its full sequence is 4-hydroxy-3-methylbut-2-en-1-yl diphosphate synthase (flavodoxin) (380 aa).

[4Fe-4S] cluster contacts are provided by C279, C282, C314, and E321.

The protein belongs to the IspG family. The cofactor is [4Fe-4S] cluster.

The catalysed reaction is (2E)-4-hydroxy-3-methylbut-2-enyl diphosphate + oxidized [flavodoxin] + H2O + 2 H(+) = 2-C-methyl-D-erythritol 2,4-cyclic diphosphate + reduced [flavodoxin]. It functions in the pathway isoprenoid biosynthesis; isopentenyl diphosphate biosynthesis via DXP pathway; isopentenyl diphosphate from 1-deoxy-D-xylulose 5-phosphate: step 5/6. Functionally, converts 2C-methyl-D-erythritol 2,4-cyclodiphosphate (ME-2,4cPP) into 1-hydroxy-2-methyl-2-(E)-butenyl 4-diphosphate. This is 4-hydroxy-3-methylbut-2-en-1-yl diphosphate synthase (flavodoxin) from Tropheryma whipplei (strain TW08/27) (Whipple's bacillus).